The primary structure comprises 553 residues: Arginine--tRNA ligase (553 aa).

A 'HIGH' region motif is present at residues 122–132 (ANPTGFLHVGH).

This sequence belongs to the class-I aminoacyl-tRNA synthetase family. Monomer.

The protein resides in the cytoplasm. It catalyses the reaction tRNA(Arg) + L-arginine + ATP = L-arginyl-tRNA(Arg) + AMP + diphosphate. The polypeptide is Arginine--tRNA ligase (Mesoplasma florum (strain ATCC 33453 / NBRC 100688 / NCTC 11704 / L1) (Acholeplasma florum)).